A 1265-amino-acid chain; its full sequence is Methionine synthase (1265 aa).

Residues 19-338 (RDEINAILQK…DHIREIAEAV (320 aa)) form the Hcy-binding domain. Zn(2+) contacts are provided by C260, C323, and C324. Residues 371-632 (FVNIGERCNV…IHKELLQLCE (262 aa)) enclose the Pterin-binding domain. Residues 382-384 (GSR), D449, N470, D537, N579, R585, and R591 each bind (6S)-5,6,7,8-tetrahydrofolate. The region spanning 662 to 759 (QTDEWRNGPV…FMEKEREETR (98 aa)) is the B12-binding N-terminal domain. Residues E709, 782–786 (GDVHD), H785, S830, T834, and A886 contribute to the methylcob(III)alamin site. Positions 772–907 (QGTIVLATVK…DENLKDEYFE (136 aa)) constitute a B12-binding domain. Residues 923 to 1265 (SLKERRYLPL…LGPILGYDTD (343 aa)) form the AdoMet activation domain. S-adenosyl-L-methionine-binding positions include D974, R1172, and 1227-1228 (YF). T1264 is modified (phosphothreonine).

Belongs to the vitamin-B12 dependent methionine synthase family. As to quaternary structure, monomer. Dimer. Forms a multiprotein complex with MMACHC, MMADHC and MTRR. It depends on methylcob(III)alamin as a cofactor. Zn(2+) is required as a cofactor. Widely expressed. Expressed at the highest levels in pancreas, heart, brain, skeletal muscle and placenta. Expressed at lower levels in lung, liver and kidney.

The protein resides in the cytoplasm. It carries out the reaction (6S)-5-methyl-5,6,7,8-tetrahydrofolate + L-homocysteine = (6S)-5,6,7,8-tetrahydrofolate + L-methionine. The protein operates within amino-acid biosynthesis; L-methionine biosynthesis via de novo pathway; L-methionine from L-homocysteine (MetH route): step 1/1. Functionally, catalyzes the transfer of a methyl group from methylcob(III)alamin (MeCbl) to homocysteine, yielding enzyme-bound cob(I)alamin and methionine in the cytosol. MeCbl is an active form of cobalamin (vitamin B12) used as a cofactor for methionine biosynthesis. Cob(I)alamin form is regenerated to MeCbl by a transfer of a methyl group from 5-methyltetrahydrofolate. The processing of cobalamin in the cytosol occurs in a multiprotein complex composed of at least MMACHC, MMADHC, MTRR (methionine synthase reductase) and MTR which may contribute to shuttle safely and efficiently cobalamin towards MTR in order to produce methionine. The polypeptide is Methionine synthase (Homo sapiens (Human)).